Here is a 122-residue protein sequence, read N- to C-terminus: Large ribosomal subunit protein uL14 (122 aa).

Belongs to the universal ribosomal protein uL14 family. Part of the 50S ribosomal subunit. Forms a cluster with proteins L3 and L19. In the 70S ribosome, L14 and L19 interact and together make contacts with the 16S rRNA in bridges B5 and B8.

Functionally, binds to 23S rRNA. Forms part of two intersubunit bridges in the 70S ribosome. This chain is Large ribosomal subunit protein uL14, found in Cyanothece sp. (strain PCC 7425 / ATCC 29141).